Here is a 270-residue protein sequence, read N- to C-terminus: Putative phosphoenolpyruvate synthase regulatory protein (270 aa).

Gly150 to Thr157 contributes to the ADP binding site.

This sequence belongs to the pyruvate, phosphate/water dikinase regulatory protein family. PSRP subfamily.

The catalysed reaction is [pyruvate, water dikinase] + ADP = [pyruvate, water dikinase]-phosphate + AMP + H(+). The enzyme catalyses [pyruvate, water dikinase]-phosphate + phosphate + H(+) = [pyruvate, water dikinase] + diphosphate. Bifunctional serine/threonine kinase and phosphorylase involved in the regulation of the phosphoenolpyruvate synthase (PEPS) by catalyzing its phosphorylation/dephosphorylation. The chain is Putative phosphoenolpyruvate synthase regulatory protein from Cupriavidus metallidurans (strain ATCC 43123 / DSM 2839 / NBRC 102507 / CH34) (Ralstonia metallidurans).